The chain runs to 563 residues: Putative ABC transporter ATP-binding protein SCO2324 (563 aa).

An ABC transporter 1 domain is found at 2-243 (IRFEDVSVTY…SPVYPPVVGL (242 aa)). Residue 36 to 43 (GPSGVGKS) coordinates ATP. The disordered stretch occupies residues 271–317 (AGREIPDHTPPPSAPLPAPPAPRPVTSRWRRRGKRPENPSAPTPYAA). Residues 278-293 (HTPPPSAPLPAPPAPR) are compositionally biased toward pro residues. The 229-residue stretch at 317–545 (AEVRSLAVRR…SPSYAPQVAK (229 aa)) folds into the ABC transporter 2 domain. 349 to 356 (GRNGAGKS) serves as a coordination point for ATP.

This sequence belongs to the ABC transporter superfamily.

The protein localises to the cell membrane. Functionally, probably part of an ABC transporter complex. Responsible for energy coupling to the transport system. This is Putative ABC transporter ATP-binding protein SCO2324 from Streptomyces coelicolor (strain ATCC BAA-471 / A3(2) / M145).